Here is a 366-residue protein sequence, read N- to C-terminus: Dihydroflavonol 4-reductase (366 aa).

Positions 45 and 164 each coordinate NADP(+).

Belongs to the NAD(P)-dependent epimerase/dehydratase family. Dihydroflavonol-4-reductase subfamily.

It carries out the reaction a (2R,3S,4S)-leucoanthocyanidin + NADP(+) = a (2R,3R)-dihydroflavonol + NADPH + H(+). The catalysed reaction is (2S)-flavan-4-ol + NADP(+) = (2S)-flavanone + NADPH + H(+). Its pathway is pigment biosynthesis; anthocyanin biosynthesis. Functionally, bifunctional enzyme involved in flavonoid metabolism. The protein is Dihydroflavonol 4-reductase (DFR) of Gerbera hybrida (Daisy).